Here is a 119-residue protein sequence, read N- to C-terminus: MTRIAGINISDKKHILVALTSIYGIGISLSKKICFSIGIRCDVKINSLTKEKIESLRSIISKFLVEGDLRREKTINIKRLMDIGCYRGLRHRKHLPVRGQRTKTNARTRKGPRKLIKSR.

A disordered region spans residues 96–119 (PVRGQRTKTNARTRKGPRKLIKSR).

This sequence belongs to the universal ribosomal protein uS13 family. In terms of assembly, part of the 30S ribosomal subunit. Forms a loose heterodimer with protein S19. Forms two bridges to the 50S subunit in the 70S ribosome.

Its function is as follows. Located at the top of the head of the 30S subunit, it contacts several helices of the 16S rRNA. In the 70S ribosome it contacts the 23S rRNA (bridge B1a) and protein L5 of the 50S subunit (bridge B1b), connecting the 2 subunits; these bridges are implicated in subunit movement. Contacts the tRNAs in the A and P-sites. The sequence is that of Small ribosomal subunit protein uS13 from Buchnera aphidicola subsp. Cinara cedri (strain Cc).